The primary structure comprises 592 residues: Proteasome-associated ATPase (592 aa).

Residues methionine 1–glutamate 11 show a composition bias toward acidic residues. Positions methionine 1 to proline 24 are disordered. A coiled-coil region spans residues alanine 25 to glutamine 99. ATP is bound at residue glycine 281–leucine 286. Residues tyrosine 591 to leucine 592 form a docks into pockets in the proteasome alpha-ring region.

It belongs to the AAA ATPase family. In terms of assembly, homohexamer. Assembles into a hexameric ring structure that caps the 20S proteasome core. Strongly interacts with the prokaryotic ubiquitin-like protein Pup through a hydrophobic interface; the interacting region of ARC lies in its N-terminal coiled-coil domain. There is one Pup binding site per ARC hexamer ring. Upon ATP-binding, the C-terminus of ARC interacts with the alpha-rings of the proteasome core, possibly by binding to the intersubunit pockets.

The protein operates within protein degradation; proteasomal Pup-dependent pathway. ATPase which is responsible for recognizing, binding, unfolding and translocation of pupylated proteins into the bacterial 20S proteasome core particle. May be essential for opening the gate of the 20S proteasome via an interaction with its C-terminus, thereby allowing substrate entry and access to the site of proteolysis. Thus, the C-termini of the proteasomal ATPase may function like a 'key in a lock' to induce gate opening and therefore regulate proteolysis. This Nakamurella multipartita (strain ATCC 700099 / DSM 44233 / CIP 104796 / JCM 9543 / NBRC 105858 / Y-104) (Microsphaera multipartita) protein is Proteasome-associated ATPase.